We begin with the raw amino-acid sequence, 428 residues long: CinA-like protein (428 aa).

The protein belongs to the CinA family.

This is CinA-like protein from Mycobacterium leprae (strain TN).